Here is a 417-residue protein sequence, read N- to C-terminus: UDP-N-acetylglucosamine 1-carboxyvinyltransferase (417 aa).

22-23 (KN) serves as a coordination point for phosphoenolpyruvate. Arg93 contacts UDP-N-acetyl-alpha-D-glucosamine. Cys117 serves as the catalytic Proton donor. 2-(S-cysteinyl)pyruvic acid O-phosphothioketal is present on Cys117. UDP-N-acetyl-alpha-D-glucosamine is bound by residues 122-126 (RPVDL), Asp305, and Ile327.

It belongs to the EPSP synthase family. MurA subfamily.

It is found in the cytoplasm. It catalyses the reaction phosphoenolpyruvate + UDP-N-acetyl-alpha-D-glucosamine = UDP-N-acetyl-3-O-(1-carboxyvinyl)-alpha-D-glucosamine + phosphate. It participates in cell wall biogenesis; peptidoglycan biosynthesis. In terms of biological role, cell wall formation. Adds enolpyruvyl to UDP-N-acetylglucosamine. This chain is UDP-N-acetylglucosamine 1-carboxyvinyltransferase, found in Thiobacillus denitrificans (strain ATCC 25259 / T1).